Reading from the N-terminus, the 291-residue chain is Acetylglutamate kinase (291 aa).

Substrate contacts are provided by residues 65–66, arginine 87, and asparagine 186; that span reads GG.

This sequence belongs to the acetylglutamate kinase family. ArgB subfamily.

Its subcellular location is the cytoplasm. The catalysed reaction is N-acetyl-L-glutamate + ATP = N-acetyl-L-glutamyl 5-phosphate + ADP. The protein operates within amino-acid biosynthesis; L-arginine biosynthesis; N(2)-acetyl-L-ornithine from L-glutamate: step 2/4. Its function is as follows. Catalyzes the ATP-dependent phosphorylation of N-acetyl-L-glutamate. This chain is Acetylglutamate kinase, found in Mycolicibacterium vanbaalenii (strain DSM 7251 / JCM 13017 / BCRC 16820 / KCTC 9966 / NRRL B-24157 / PYR-1) (Mycobacterium vanbaalenii).